We begin with the raw amino-acid sequence, 319 residues long: Urease accessory protein UreD (319 aa).

Residues 284 to 319 (RLSTPQPPREWPLQEEGTFSNERFTKDHQSPSASPH) form a disordered region.

It belongs to the UreD family. As to quaternary structure, ureD, UreF and UreG form a complex that acts as a GTP-hydrolysis-dependent molecular chaperone, activating the urease apoprotein by helping to assemble the nickel containing metallocenter of UreC. The UreE protein probably delivers the nickel.

It localises to the cytoplasm. Required for maturation of urease via the functional incorporation of the urease nickel metallocenter. This Prochlorococcus marinus (strain MIT 9313) protein is Urease accessory protein UreD.